Here is a 787-residue protein sequence, read N- to C-terminus: uncharacterized protein (787 aa).

Methionine 1 bears the N-acetylmethionine mark. Disordered stretches follow at residues 1–115 (MFDG…NDHK), 130–200 (TNPF…QRSE), and 217–238 (VSSG…ASQD). A compositionally biased stretch (polar residues) spans 36-54 (VPSTIKKSTNIARTSTAET). The residue at position 63 (serine 63) is a Phosphoserine. Residues 130–142 (TNPFTTSANSNAH) are compositionally biased toward polar residues. Residues 160-169 (SITTSISNNT) show a composition bias toward low complexity. The segment covering 170 to 184 (TKEEIESNNDSERDS) has biased composition (basic and acidic residues). Low complexity predominate over residues 218 to 230 (SSGSSLSLDTSEN). Serine 254, serine 313, serine 342, serine 345, serine 390, serine 477, serine 492, serine 546, serine 683, and serine 699 each carry phosphoserine.

The protein localises to the cytoplasm. This is an uncharacterized protein from Saccharomyces cerevisiae (strain ATCC 204508 / S288c) (Baker's yeast).